We begin with the raw amino-acid sequence, 437 residues long: Zinc finger CCCH domain-containing protein 40 (437 aa).

The segment at 6–33 adopts a C3H1-type zinc-finger fold; it reads MYKTKLCILFNKTGDCSRPNCTFAHGNA. Positions 35-107 are disordered; that stretch reads LRRPGESSFT…MPFENRRDKD (73 aa). Basic and acidic residues predominate over residues 48-85; that stretch reads HNMDSDLRDRRHNMDSDLRDRLGRQFSPERRPSLDRSG. Positions 145-244 form a coiled coil; sequence NNVLEEQLKD…LGNQLSTYLA (100 aa). Residue S259 is modified to Phosphoserine. 2 disordered regions span residues 266 to 360 and 380 to 437; these read RNLR…RRRF and EFDD…DDSV. Positions 307–319 are enriched in basic and acidic residues; sequence RGEEEKVENEKKR. Acidic residues-rich tracts occupy residues 333-343 and 383-392; these read EEESGAWNDED and DVAESEEENP. A compositionally biased stretch (basic and acidic residues) spans 426-437; sequence MEQKKAYDDDSV.

The protein is Zinc finger CCCH domain-containing protein 40 of Arabidopsis thaliana (Mouse-ear cress).